Reading from the N-terminus, the 151-residue chain is uncharacterized protein (151 aa).

The tract at residues 1–24 (MHAKTKKLGTDTSYKRPQVTAQEQ) is disordered.

This is an uncharacterized protein from Acanthamoeba polyphaga mimivirus (APMV).